The sequence spans 232 residues: Ribonuclease 3 (232 aa).

The RNase III domain maps to 6–133 (FNDIENRLGV…VIAAVYLDKG (128 aa)). Glutamate 46 contributes to the Mg(2+) binding site. Aspartate 50 is an active-site residue. Aspartate 119 and glutamate 122 together coordinate Mg(2+). Glutamate 122 is a catalytic residue. The DRBM domain maps to 160–229 (DFKTKLQELL…AKEALKRLEK (70 aa)).

Belongs to the ribonuclease III family. In terms of assembly, homodimer. Mg(2+) serves as cofactor.

The protein localises to the cytoplasm. The enzyme catalyses Endonucleolytic cleavage to 5'-phosphomonoester.. Digests double-stranded RNA. Involved in the processing of primary rRNA transcript to yield the immediate precursors to the large and small rRNAs (23S and 16S). Processes some mRNAs, and tRNAs when they are encoded in the rRNA operon. Processes pre-crRNA and tracrRNA of type II CRISPR loci if present in the organism. In Clostridium botulinum (strain Eklund 17B / Type B), this protein is Ribonuclease 3.